We begin with the raw amino-acid sequence, 336 residues long: Glucokinase (336 aa).

12 to 17 (ADIGGT) is an ATP binding site.

Belongs to the bacterial glucokinase family.

Its subcellular location is the cytoplasm. The catalysed reaction is D-glucose + ATP = D-glucose 6-phosphate + ADP + H(+). The chain is Glucokinase from Helicobacter pylori (strain P12).